We begin with the raw amino-acid sequence, 183 residues long: Capsid protein (183 aa).

The interval 136–183 is disordered; the sequence is NAPILSTLPETTVVRRRGRSPRRRTPSPRRRRSESPRRRRSQSRESQC. A compositionally biased stretch (basic residues) spans 149-176; that stretch reads VRRRGRSPRRRTPSPRRRRSESPRRRRS. Ser155, Ser162, and Ser170 each carry phosphoserine; by host. A 1; half-length repeat occupies 155–160; it reads SPRRRT. The interval 155-176 is 3 X 7 AA repeats of S-P-R-R-R-[PR]-S; it reads SPRRRTPSPRRRRSESPRRRRS. Positions 158–175 match the Bipartite nuclear localization signal motif; it reads RRTPSPRRRRSESPRRRR. 2 consecutive repeat copies span residues 162–168 and 170–176. Positions 177–183 are RNA binding; sequence QSRESQC.

Belongs to the orthohepadnavirus core antigen family. As to quaternary structure, homodimerizes, then multimerizes. Interacts with cytosol exposed regions of viral L glycoprotein present in the reticulum-to-Golgi compartment. Interacts with human FLNB. Phosphorylated form interacts with host importin alpha; this interaction depends on the exposure of the NLS, which itself depends upon genome maturation and/or phosphorylation of the capsid protein. Interacts with host NUP153. Phosphorylated by host SRPK1, SRPK2, and maybe protein kinase C or GAPDH. Phosphorylation is critical for pregenomic RNA packaging. Protein kinase C phosphorylation is stimulated by HBx protein and may play a role in transport of the viral genome to the nucleus at the late step during the viral replication cycle.

It localises to the virion. It is found in the host cytoplasm. Functionally, self assembles to form an icosahedral capsid. Most capsids appear to be large particles with an icosahedral symmetry of T=4 and consist of 240 copies of capsid protein, though a fraction forms smaller T=3 particles consisting of 180 capsid proteins. Entering capsids are transported along microtubules to the nucleus. Phosphorylation of the capsid is thought to induce exposure of nuclear localization signal in the C-terminal portion of the capsid protein that allows binding to the nuclear pore complex via the importin (karyopherin-) alpha and beta. Capsids are imported in intact form through the nuclear pore into the nuclear basket, where it probably binds NUP153. Only capsids that contain the mature viral genome can release the viral DNA and capsid protein into the nucleoplasm. Immature capsids get stuck in the basket. Capsids encapsulate the pre-genomic RNA and the P protein. Pre-genomic RNA is reverse-transcribed into DNA while the capsid is still in the cytoplasm. The capsid can then either be directed to the nucleus, providing more genomes for transcription, or bud through the endoplasmic reticulum to provide new virions. This Homo sapiens (Human) protein is Capsid protein.